A 44-amino-acid chain; its full sequence is Antibacterial protein 2 homolog (44 aa).

It belongs to the staphylococcal hemolytic protein family.

The protein resides in the secreted. In terms of biological role, has hemolytic activity and also inhibits the growth of gonococci. The chain is Antibacterial protein 2 homolog from Staphylococcus haemolyticus (strain JCSC1435).